The sequence spans 142 residues: Transcriptional regulator MraZ (142 aa).

SpoVT-AbrB domains are found at residues 5 to 47 (EFTH…PLNE) and 76 to 119 (ATDC…SAER).

Belongs to the MraZ family. In terms of assembly, forms oligomers.

Its subcellular location is the cytoplasm. The protein resides in the nucleoid. In Limosilactobacillus reuteri (strain DSM 20016) (Lactobacillus reuteri), this protein is Transcriptional regulator MraZ.